Reading from the N-terminus, the 434-residue chain is F-box/LRR-repeat protein 21 (434 aa).

In terms of domain architecture, F-box spans 39–85 (LLDWGNLPHHVVLRIFQYLPLIDRARASSVCRRWNEVFHIPDLWRKF). LRR repeat units lie at residues 187 to 213 (DTPVDDPSLSILVANNSGTLRRLKMSS), 214 to 239 (CPHVSSNGILCVADHCQGLRELALNY), 242 to 265 (LSDKLLLALSNETHVNLEHLRIDV), 322 to 347 (GRSVSKEILGRLGLNCPRLTELVVCA), 349 to 374 (GIQVIDTELICIAEHCKNLTALGLSE), and 375 to 400 (CEVSCSAFIEFVRLCGRKLTHLSIME).

As to quaternary structure, part of the SCF (SKP1-CUL1-F-box) E3 ubiquitin-protein ligase complex SCF(FBXL21) composed of CUL1, SKP1, RBX1 and FBXL21. Interacts with CRY1 and CRY2.

It localises to the cytoplasm. The protein localises to the cytosol. It is found in the nucleus. It participates in protein modification; protein ubiquitination. Functionally, substrate-recognition component of the SCF(FBXL21) E3 ubiquitin ligase complex involved in circadian rhythm function. Plays a key role in the maintenance of both the speed and the robustness of the circadian clock oscillation. The SCF(FBXL21) complex mainly acts in the cytosol and mediates ubiquitination of CRY proteins (CRY1 and CRY2), leading to CRY proteins stabilization. The SCF(FBXL21) complex counteracts the activity of the SCF(FBXL3) complex and protects CRY proteins from degradation. Involved in the hypothalamic suprachiasmatic nucleus (SCN) clock regulating temporal organization of the daily activities. The sequence is that of F-box/LRR-repeat protein 21 (FBXL21) from Bos taurus (Bovine).